The chain runs to 355 residues: Serine acetyltransferase 4 (355 aa).

Belongs to the transferase hexapeptide repeat family. In terms of assembly, homomultimer. In terms of tissue distribution, localized in vascular tissues, particularly in phloem.

The protein resides in the cytoplasm. The enzyme catalyses L-serine + acetyl-CoA = O-acetyl-L-serine + CoA. It functions in the pathway amino-acid biosynthesis; L-cysteine biosynthesis; L-cysteine from L-serine: step 1/2. Its activity is regulated as follows. Feedback inhibitions by L-Ser and acetyl-CoA. In Arabidopsis thaliana (Mouse-ear cress), this protein is Serine acetyltransferase 4.